The primary structure comprises 372 residues: Protein L-Myc-1a (372 aa).

Disordered regions lie at residues 172 to 226 (KVAA…ADPF) and 243 to 306 (NYAA…DDLR). Residues 187-197 (SDDDEDDDEID) show a composition bias toward acidic residues. Residues 269 to 284 (ESSSAPSSPLSSPATS) are compositionally biased toward low complexity. The bHLH domain occupies 289–341 (STEQRRNFLERKRRDDLRSRFQALREEIPGLSGSSKTSKVAILTQATDYLLQL). Residues 290-306 (TEQRRNFLERKRRDDLR) show a composition bias toward basic and acidic residues. Positions 341 to 369 (LHSSQRRQAQEKRKLKAKQQQLLRRISAL) are leucine-zipper.

Efficient DNA binding requires dimerization with another bHLH protein. Binds DNA as a heterodimer with max. Uterus.

The protein resides in the nucleus. This Danio rerio (Zebrafish) protein is Protein L-Myc-1a.